Consider the following 128-residue polypeptide: Ribonuclease P protein component (128 aa).

It belongs to the RnpA family. In terms of assembly, consists of a catalytic RNA component (M1 or rnpB) and a protein subunit.

It catalyses the reaction Endonucleolytic cleavage of RNA, removing 5'-extranucleotides from tRNA precursor.. In terms of biological role, RNaseP catalyzes the removal of the 5'-leader sequence from pre-tRNA to produce the mature 5'-terminus. It can also cleave other RNA substrates such as 4.5S RNA. The protein component plays an auxiliary but essential role in vivo by binding to the 5'-leader sequence and broadening the substrate specificity of the ribozyme. The sequence is that of Ribonuclease P protein component from Prochlorococcus marinus (strain MIT 9301).